The sequence spans 206 residues: Small ribosomal subunit protein uS4 (206 aa).

The region spanning 96 to 156 is the S4 RNA-binding domain; the sequence is GRLDNVVYRM…EKAKKQSRVK (61 aa).

It belongs to the universal ribosomal protein uS4 family. As to quaternary structure, part of the 30S ribosomal subunit. Contacts protein S5. The interaction surface between S4 and S5 is involved in control of translational fidelity.

Functionally, one of the primary rRNA binding proteins, it binds directly to 16S rRNA where it nucleates assembly of the body of the 30S subunit. In terms of biological role, with S5 and S12 plays an important role in translational accuracy. In Pectobacterium atrosepticum (strain SCRI 1043 / ATCC BAA-672) (Erwinia carotovora subsp. atroseptica), this protein is Small ribosomal subunit protein uS4.